Reading from the N-terminus, the 233-residue chain is Ribonuclease 3 (233 aa).

In terms of domain architecture, RNase III spans 4–126 (LNKLMERLGH…IVGAIYIDAG (123 aa)). Glu39 contacts Mg(2+). Asp43 is a catalytic residue. Residues Asp112 and Glu115 each coordinate Mg(2+). Glu115 is a catalytic residue. The 70-residue stretch at 153-222 (DAKSLLQEWL…AKRFLELLDD (70 aa)) folds into the DRBM domain.

Belongs to the ribonuclease III family. Homodimer. It depends on Mg(2+) as a cofactor.

Its subcellular location is the cytoplasm. It carries out the reaction Endonucleolytic cleavage to 5'-phosphomonoester.. Functionally, digests double-stranded RNA. Involved in the processing of primary rRNA transcript to yield the immediate precursors to the large and small rRNAs (23S and 16S). Processes some mRNAs, and tRNAs when they are encoded in the rRNA operon. Processes pre-crRNA and tracrRNA of type II CRISPR loci if present in the organism. The protein is Ribonuclease 3 of Coxiella burnetii (strain CbuK_Q154) (Coxiella burnetii (strain Q154)).